The following is a 904-amino-acid chain: Nitrate reductase [NADH] 2 (904 aa).

Composition is skewed to polar residues over residues 1–10 (MAASVENRQF) and 35–50 (PSPN…NSTI). The tract at residues 1 to 65 (MAASVENRQF…SSEDDDDDDE (65 aa)) is disordered. Acidic residues predominate over residues 56 to 65 (SSEDDDDDDE). Cys-183 serves as a coordination point for Mo-molybdopterin. The Cytochrome b5 heme-binding domain maps to 531-606 (SKMYSMSEVR…LEDFRIGELI (76 aa)). Heme contacts are provided by His-566 and His-589. Positions 647–759 (REKIPCKLID…KGPLGHIEYQ (113 aa)) constitute an FAD-binding FR-type domain. FAD contacts are provided by residues 699-702 (RAYT), 716-720 (VVKIY), Phe-721, Phe-728, 733-735 (QMS), and Thr-786.

The protein belongs to the nitrate reductase family. Homodimer. The cofactor is FAD. Heme is required as a cofactor. Mo-molybdopterin serves as cofactor.

The enzyme catalyses nitrite + NAD(+) + H2O = nitrate + NADH + H(+). Regulated by the nitrogen source and controlled by the circadian rhythm. Functionally, nitrate reductase is a key enzyme involved in the first step of nitrate assimilation in plants, fungi and bacteria. The sequence is that of Nitrate reductase [NADH] 2 (NIA2) from Nicotiana tabacum (Common tobacco).